A 115-amino-acid chain; its full sequence is Large ribosomal subunit protein uL22 (115 aa).

Belongs to the universal ribosomal protein uL22 family. Part of the 50S ribosomal subunit.

Its function is as follows. This protein binds specifically to 23S rRNA; its binding is stimulated by other ribosomal proteins, e.g. L4, L17, and L20. It is important during the early stages of 50S assembly. It makes multiple contacts with different domains of the 23S rRNA in the assembled 50S subunit and ribosome. The globular domain of the protein is located near the polypeptide exit tunnel on the outside of the subunit, while an extended beta-hairpin is found that lines the wall of the exit tunnel in the center of the 70S ribosome. The protein is Large ribosomal subunit protein uL22 of Lactiplantibacillus plantarum (strain ATCC BAA-793 / NCIMB 8826 / WCFS1) (Lactobacillus plantarum).